Here is a 126-residue protein sequence, read N- to C-terminus: Large ribosomal subunit protein bL12 (126 aa).

This sequence belongs to the bacterial ribosomal protein bL12 family. In terms of assembly, homodimer. Part of the ribosomal stalk of the 50S ribosomal subunit. Forms a multimeric L10(L12)X complex, where L10 forms an elongated spine to which 2 to 4 L12 dimers bind in a sequential fashion. Binds GTP-bound translation factors.

In terms of biological role, forms part of the ribosomal stalk which helps the ribosome interact with GTP-bound translation factors. Is thus essential for accurate translation. This Chlorobium phaeobacteroides (strain BS1) protein is Large ribosomal subunit protein bL12.